A 316-amino-acid polypeptide reads, in one-letter code: Transaldolase (316 aa).

Catalysis depends on K132, which acts as the Schiff-base intermediate with substrate.

The protein belongs to the transaldolase family. Type 1 subfamily. As to quaternary structure, homodimer.

The protein resides in the cytoplasm. It catalyses the reaction D-sedoheptulose 7-phosphate + D-glyceraldehyde 3-phosphate = D-erythrose 4-phosphate + beta-D-fructose 6-phosphate. The protein operates within carbohydrate degradation; pentose phosphate pathway; D-glyceraldehyde 3-phosphate and beta-D-fructose 6-phosphate from D-ribose 5-phosphate and D-xylulose 5-phosphate (non-oxidative stage): step 2/3. Functionally, transaldolase is important for the balance of metabolites in the pentose-phosphate pathway. The protein is Transaldolase of Aeromonas salmonicida (strain A449).